The primary structure comprises 475 residues: Ribulose bisphosphate carboxylase large chain (475 aa).

A propeptide spanning residues 1–2 (MS) is cleaved from the precursor. N-acetylproline is present on P3. An N6,N6,N6-trimethyllysine modification is found at K14. N123 and T173 together coordinate substrate. K175 serves as the catalytic Proton acceptor. Residue K177 coordinates substrate. Mg(2+) is bound by residues K201, D203, and E204. Residue K201 is modified to N6-carboxylysine. H294 acts as the Proton acceptor in catalysis. 3 residues coordinate substrate: R295, H327, and S379.

It belongs to the RuBisCO large chain family. Type I subfamily. As to quaternary structure, heterohexadecamer of 8 large chains and 8 small chains; disulfide-linked. The disulfide link is formed within the large subunit homodimers. Mg(2+) serves as cofactor. Post-translationally, the disulfide bond which can form in the large chain dimeric partners within the hexadecamer appears to be associated with oxidative stress and protein turnover.

Its subcellular location is the plastid. The protein resides in the chloroplast. The catalysed reaction is 2 (2R)-3-phosphoglycerate + 2 H(+) = D-ribulose 1,5-bisphosphate + CO2 + H2O. It carries out the reaction D-ribulose 1,5-bisphosphate + O2 = 2-phosphoglycolate + (2R)-3-phosphoglycerate + 2 H(+). Functionally, ruBisCO catalyzes two reactions: the carboxylation of D-ribulose 1,5-bisphosphate, the primary event in carbon dioxide fixation, as well as the oxidative fragmentation of the pentose substrate in the photorespiration process. Both reactions occur simultaneously and in competition at the same active site. This is Ribulose bisphosphate carboxylase large chain from Vitis vinifera (Grape).